The primary structure comprises 243 residues: Exosome complex component Rrp41 (243 aa).

This sequence belongs to the RNase PH family. Rrp41 subfamily. As to quaternary structure, component of the archaeal exosome complex. Forms a hexameric ring-like arrangement composed of 3 Rrp41-Rrp42 heterodimers. The hexameric ring associates with a trimer of Rrp4 and/or Csl4 subunits.

The protein localises to the cytoplasm. Its function is as follows. Catalytic component of the exosome, which is a complex involved in RNA degradation. Has 3'-&gt;5' exoribonuclease activity. Can also synthesize heteromeric RNA-tails. In Sulfurisphaera tokodaii (strain DSM 16993 / JCM 10545 / NBRC 100140 / 7) (Sulfolobus tokodaii), this protein is Exosome complex component Rrp41.